The primary structure comprises 288 residues: Undecaprenyl-diphosphatase (288 aa).

The next 8 membrane-spanning stretches (helical) occupy residues 25–45, 53–73, 93–113, 121–141, 171–191, 196–216, 231–251, and 263–283; these read GITE…NEFL, FIDM…MVIY, WKLW…GLLL, LSNF…FIWI, VLSI…GIIV, SVAA…YSGL, GQAA…LFVI, and FTVF…YGAV.

The protein belongs to the UppP family.

It localises to the cell membrane. The enzyme catalyses di-trans,octa-cis-undecaprenyl diphosphate + H2O = di-trans,octa-cis-undecaprenyl phosphate + phosphate + H(+). Its function is as follows. Catalyzes the dephosphorylation of undecaprenyl diphosphate (UPP). Confers resistance to bacitracin. The polypeptide is Undecaprenyl-diphosphatase (Streptococcus thermophilus (strain ATCC BAA-250 / LMG 18311)).